Consider the following 47-residue polypeptide: Antimicrobial peptide LCI (47 aa).

It localises to the secreted. Functionally, has antibacterial activity against X.oryzae pv oryzae and R.solanacearum, but not E.coli or P.carotovorum subsp carotovorum. May bind DNA or mRNA. The sequence is that of Antimicrobial peptide LCI from Bacillus subtilis.